A 355-amino-acid chain; its full sequence is NADH dehydrogenase [ubiquinone] 1 alpha subcomplex subunit 10, mitochondrial (355 aa).

The transit peptide at 1-35 (MALRLLKLGATSASARVVAAGAQRVRGIHSSGQCK) directs the protein to the mitochondrion. The residue at position 250 (Ser250) is a Phosphoserine; by PINK1. Lys285 bears the N6-succinyllysine mark.

The protein belongs to the complex I NDUFA10 subunit family. In terms of assembly, complex I is composed of 45 different subunits. This a component of the hydrophobic protein fraction. Requires FAD as cofactor. Phosphorylation at Ser-250 by PINK1 is required for the binding and/or reduction of the complex I substrate ubiquinone.

The protein resides in the mitochondrion matrix. Accessory subunit of the mitochondrial membrane respiratory chain NADH dehydrogenase (Complex I), that is believed not to be involved in catalysis. Complex I functions in the transfer of electrons from NADH to the respiratory chain. The immediate electron acceptor for the enzyme is believed to be ubiquinone. The chain is NADH dehydrogenase [ubiquinone] 1 alpha subcomplex subunit 10, mitochondrial (NDUFA10) from Gorilla gorilla gorilla (Western lowland gorilla).